Reading from the N-terminus, the 278-residue chain is Ribosomal RNA small subunit methyltransferase A (278 aa).

The S-adenosyl-L-methionine site is built by N27, L29, G54, E75, D101, and N120.

The protein belongs to the class I-like SAM-binding methyltransferase superfamily. rRNA adenine N(6)-methyltransferase family. RsmA subfamily.

It localises to the cytoplasm. The catalysed reaction is adenosine(1518)/adenosine(1519) in 16S rRNA + 4 S-adenosyl-L-methionine = N(6)-dimethyladenosine(1518)/N(6)-dimethyladenosine(1519) in 16S rRNA + 4 S-adenosyl-L-homocysteine + 4 H(+). In terms of biological role, specifically dimethylates two adjacent adenosines (A1518 and A1519) in the loop of a conserved hairpin near the 3'-end of 16S rRNA in the 30S particle. May play a critical role in biogenesis of 30S subunits. The chain is Ribosomal RNA small subunit methyltransferase A from Zymomonas mobilis subsp. mobilis (strain ATCC 31821 / ZM4 / CP4).